The sequence spans 464 residues: UPF0210 protein Cgl1545/cg1743 (464 aa).

This sequence belongs to the UPF0210 family. In terms of assembly, homodimer.

In Corynebacterium glutamicum (strain ATCC 13032 / DSM 20300 / JCM 1318 / BCRC 11384 / CCUG 27702 / LMG 3730 / NBRC 12168 / NCIMB 10025 / NRRL B-2784 / 534), this protein is UPF0210 protein Cgl1545/cg1743.